The sequence spans 493 residues: ATP synthase subunit beta, chloroplastic (493 aa).

170-177 (GGAGVGKT) is an ATP binding site.

It belongs to the ATPase alpha/beta chains family. F-type ATPases have 2 components, CF(1) - the catalytic core - and CF(0) - the membrane proton channel. CF(1) has five subunits: alpha(3), beta(3), gamma(1), delta(1), epsilon(1). CF(0) has four main subunits: a(1), b(1), b'(1) and c(9-12).

The protein localises to the plastid. Its subcellular location is the chloroplast thylakoid membrane. It carries out the reaction ATP + H2O + 4 H(+)(in) = ADP + phosphate + 5 H(+)(out). Its function is as follows. Produces ATP from ADP in the presence of a proton gradient across the membrane. The catalytic sites are hosted primarily by the beta subunits. This chain is ATP synthase subunit beta, chloroplastic, found in Lachenalia pusilla (Cape cowslips).